A 338-amino-acid polypeptide reads, in one-letter code: Lipoate-protein ligase A (338 aa).

The region spanning 29–216 (DPNQRVLFLW…AFFSHYGERV (188 aa)) is the BPL/LPL catalytic domain. Residues arginine 71, 76-79 (GAVF), and lysine 134 each bind ATP. Residue lysine 134 coordinates (R)-lipoate.

It belongs to the LplA family. In terms of assembly, monomer.

It is found in the cytoplasm. It catalyses the reaction L-lysyl-[lipoyl-carrier protein] + (R)-lipoate + ATP = N(6)-[(R)-lipoyl]-L-lysyl-[lipoyl-carrier protein] + AMP + diphosphate + H(+). Its pathway is protein modification; protein lipoylation via exogenous pathway; protein N(6)-(lipoyl)lysine from lipoate: step 1/2. It functions in the pathway protein modification; protein lipoylation via exogenous pathway; protein N(6)-(lipoyl)lysine from lipoate: step 2/2. In terms of biological role, catalyzes both the ATP-dependent activation of exogenously supplied lipoate to lipoyl-AMP and the transfer of the activated lipoyl onto the lipoyl domains of lipoate-dependent enzymes. This Aeromonas hydrophila subsp. hydrophila (strain ATCC 7966 / DSM 30187 / BCRC 13018 / CCUG 14551 / JCM 1027 / KCTC 2358 / NCIMB 9240 / NCTC 8049) protein is Lipoate-protein ligase A.